Consider the following 1087-residue polypeptide: Platelet-derived growth factor receptor alpha (1087 aa).

A signal peptide spans Met-1 to Ala-24. Residues Glu-25–Ala-530 are Extracellular-facing. Ig-like C2-type domains lie at Pro-27–Glu-114 and Ile-118–Trp-211. Cys-50 and Cys-101 form a disulfide bridge. N-linked (GlcNAc...) asparagine glycans are attached at residues Asn-77 and Asn-104. Residues Cys-151 and Cys-192 are joined by a disulfide bond. Residues Asn-216, Asn-282, Asn-309, Asn-356, Asn-362, Asn-461, and Asn-471 are each glycosylated (N-linked (GlcNAc...) asparagine). Ig-like C2-type domains are found at residues Ile-217 to Asn-309, Lys-315 to Ser-409, and Pro-417 to Val-519. Cys-238 and Cys-293 are disulfide-bonded. Cys-438 and Cys-503 form a disulfide bridge. The chain crosses the membrane as a helical span at residues Ala-531–Trp-551. Over Lys-552–Leu-1087 the chain is Cytoplasmic. A phosphotyrosine; by autocatalysis mark is found at Tyr-574 and Tyr-576. Residues Leu-595–Leu-970 form the Protein kinase domain. ATP-binding positions include Leu-601–Val-609 and Lys-629. A phosphotyrosine; by autocatalysis mark is found at Tyr-722, Tyr-733, Tyr-744, Tyr-756, and Tyr-764. Asp-818 acts as the Proton acceptor in catalysis. Residues Tyr-849, Tyr-988, and Tyr-1017 each carry the phosphotyrosine; by autocatalysis modification. The interval Tyr-1017 to Thr-1064 is disordered. The segment covering Ser-1039–Phe-1057 has biased composition (polar residues).

This sequence belongs to the protein kinase superfamily. Tyr protein kinase family. CSF-1/PDGF receptor subfamily. As to quaternary structure, interacts with homodimeric pdgfa, pdgfb and pdgfc, and with heterodimers formed by pdgfa and pdgfb. Monomer in the absence of bound ligand. Interaction with dimeric pdgfa, pdgfb and/or pdgfc leads to receptor dimerization, where both pdgfra homodimers and heterodimers with pdgfrb are observed. Ubiquitinated, leading to its internalization and degradation. In terms of processing, autophosphorylated on tyrosine residues upon ligand binding. Autophosphorylation occurs in trans, i.e. one subunit of the dimeric receptor phosphorylates tyrosine residues on the other subunit.

The protein resides in the cell membrane. The protein localises to the cell projection. It is found in the cilium. It localises to the golgi apparatus. The enzyme catalyses L-tyrosyl-[protein] + ATP = O-phospho-L-tyrosyl-[protein] + ADP + H(+). Its activity is regulated as follows. Present in an inactive conformation in the absence of bound ligand. Binding of pdgfa and/or pdgfb leads to dimerization and activation by autophosphorylation on tyrosine residues. Functionally, tyrosine-protein kinase that acts as a cell-surface receptor for pdgfa, pdgfb and pdgfc and plays an essential role in the regulation of embryonic development, cell proliferation, survival and chemotaxis. Depending on the context, promotes or inhibits cell proliferation and cell migration. Plays an important role in the differentiation of bone marrow-derived mesenchymal stem cells. Required for normal skeleton development. Required for normal development of the gastrointestinal tract. Plays a role in cell migration and chemotaxis in wound healing. Plays a role in platelet activation, secretion of agonists from platelet granules, and in thrombin-induced platelet aggregation. Binding of its cognate ligands - homodimeric pdgfa, homodimeric pdgfb, heterodimers formed by pdgfa and pdgfb or homodimeric pdgfc -leads to the activation of several signaling cascades; the response depends on the nature of the bound ligand and is modulated by the formation of heterodimers between pdgfra and pdgfrb. Phosphorylates pik3r1, plcg1, and ptpn11. Activation of plcg1 leads to the production of the cellular signaling molecules diacylglycerol and inositol 1,4,5-trisphosphate, mobilization of cytosolic Ca(2+) and the activation of protein kinase C. Phosphorylates pik3r1, the regulatory subunit of phosphatidylinositol 3-kinase, and thereby mediates activation of the akt1 signaling pathway. Mediates activation of hras and of the MAP kinases mapk1/erk2 and/or mapk3/erk1. Promotes activation of stat family members stat1, stat3 and stat5a and/or stat5b. Receptor signaling is down-regulated by protein phosphatases that dephosphorylate the receptor and its down-stream effectors, and by rapid internalization of the activated receptor. This Xenopus laevis (African clawed frog) protein is Platelet-derived growth factor receptor alpha (pdgfra).